The following is a 152-amino-acid chain: UPF0266 membrane protein YobD (152 aa).

A run of 3 helical transmembrane segments spans residues 6–26 (LVLI…QFIM), 45–65 (IDSV…VTNH), and 67–87 (ALIT…IFWI).

It belongs to the UPF0266 family.

It is found in the cell inner membrane. This chain is UPF0266 membrane protein YobD, found in Escherichia coli O45:K1 (strain S88 / ExPEC).